Consider the following 118-residue polypeptide: C-type natriuretic peptide 2 (118 aa).

Residues 1–22 (MHFCHIVGWGLVLAVLYLRTEA) form the signal peptide. A propeptide spanning residues 23-96 (KPVAQAHQKS…SRKIKGINKK (74 aa)) is cleaved from the precursor. A disulfide bond links Cys102 and Cys118.

Belongs to the natriuretic peptide family.

Its subcellular location is the secreted. Functionally, exhibits natriuretic and vasodepressor activity. Has a cGMP-stimulating activity. The protein is C-type natriuretic peptide 2 of Aquarana catesbeiana (American bullfrog).